The chain runs to 595 residues: Trafficking protein particle complex subunit 14 (595 aa).

2 disordered regions span residues 84-111 (ASVS…ECVE) and 494-513 (SNPP…SSPA).

In terms of assembly, component of the multisubunit TRAPP II complex, which includes at least TRAPPC1, TRAPPC2, TRAPPC2L, TRAPPC3, TRAPPC4, TRAPPC5, TRAPPC6A/B, TRAPPC9, TRAPPC10 and TRAPPC14. TRAPPC9, TRAPPC10 and TRAPPC14 are specific subunits of the TRAPP II complex. Interacts with alpha-tubulin during mitosis.

The protein resides in the cytoplasm. The protein localises to the cytoskeleton. It localises to the spindle. Its subcellular location is the vesicle. It is found in the midbody. In terms of biological role, specific subunit of the TRAPP (transport protein particle) II complex, a highly conserved vesicle tethering complex that functions in late Golgi trafficking as a membrane tether. TRAPP II complex also has GEF activity toward RAB1A. TRAPPC14 is required for ciliogenesis. The polypeptide is Trafficking protein particle complex subunit 14 (trappc14) (Danio rerio (Zebrafish)).